The sequence spans 500 residues: Putative (R)-citramalate synthase CimA (500 aa).

The Pyruvate carboxyltransferase domain maps to 9 to 258 (LRFFDTTLRD…DTRIRTERLY (250 aa)).

Belongs to the alpha-IPM synthase/homocitrate synthase family. Homodimer.

The catalysed reaction is pyruvate + acetyl-CoA + H2O = (3R)-citramalate + CoA + H(+). It participates in amino-acid biosynthesis; L-isoleucine biosynthesis; 2-oxobutanoate from pyruvate: step 1/3. Functionally, catalyzes the condensation of pyruvate and acetyl-coenzyme A to form (R)-citramalate. In Methanosphaerula palustris (strain ATCC BAA-1556 / DSM 19958 / E1-9c), this protein is Putative (R)-citramalate synthase CimA.